The sequence spans 205 residues: High frequency lysogenization protein HflD homolog (205 aa).

Belongs to the HflD family.

It is found in the cytoplasm. The protein resides in the cell inner membrane. The protein is High frequency lysogenization protein HflD homolog of Shewanella piezotolerans (strain WP3 / JCM 13877).